Reading from the N-terminus, the 168-residue chain is Large ribosomal subunit protein uL10 (168 aa).

Belongs to the universal ribosomal protein uL10 family. Part of the ribosomal stalk of the 50S ribosomal subunit. The N-terminus interacts with L11 and the large rRNA to form the base of the stalk. The C-terminus forms an elongated spine to which L12 dimers bind in a sequential fashion forming a multimeric L10(L12)X complex.

In terms of biological role, forms part of the ribosomal stalk, playing a central role in the interaction of the ribosome with GTP-bound translation factors. The polypeptide is Large ribosomal subunit protein uL10 (rplJ) (Mycoplasmopsis pulmonis (strain UAB CTIP) (Mycoplasma pulmonis)).